Here is a 459-residue protein sequence, read N- to C-terminus: Glutamyl-tRNA reductase (459 aa).

Residues 47 to 50 (TCNR), Ser140, 145 to 147 (EPQ), and Gln151 each bind substrate. Cys48 acts as the Nucleophile in catalysis. Residue 220 to 225 (AAGEMN) participates in NADP(+) binding.

Belongs to the glutamyl-tRNA reductase family. Homodimer.

It carries out the reaction (S)-4-amino-5-oxopentanoate + tRNA(Glu) + NADP(+) = L-glutamyl-tRNA(Glu) + NADPH + H(+). It functions in the pathway porphyrin-containing compound metabolism; protoporphyrin-IX biosynthesis; 5-aminolevulinate from L-glutamyl-tRNA(Glu): step 1/2. Functionally, catalyzes the NADPH-dependent reduction of glutamyl-tRNA(Glu) to glutamate 1-semialdehyde (GSA). This chain is Glutamyl-tRNA reductase, found in Psychrobacter arcticus (strain DSM 17307 / VKM B-2377 / 273-4).